Here is a 430-residue protein sequence, read N- to C-terminus: MANVVVVGAQWGDEGKGKIVDWLSEQADIVVRFQGGHNAGHTLVINGQTYKLALLPSGVLRPSKLAVIGNGVVFDPQAFLDEVKKLQGQGVAISPENLRIAENVTLILPLHRELDATRENAAKAGAIGTTQRGIGPAYEDKVGRRAIRLMDLADLDTLPTKIERLLAHHNALRRGLDQPEIDAGQILADLSAMAPHLLPYAESVWRLLDIKRREGKRILFEGAQGALLDVDHGTYPYVTSSNTVAAQAATGTGMGPGAVGYVLGICKAYTTRVGAGPFPTELTNEIGEEIGRRGKEFGVNTGRKRRCGWFDAVLVRQTVRTCGIHGLALTKLDILDGFDSVEVCVGYKLDGKEIDYLPAGEGAQARVEPIYETIEGWKEPTANARSWAELPAQAIKYVRRIEELVGCPVALLSTSPEREDTILVQNPFEA.

GTP is bound by residues 12 to 18 (GDEGKGK) and 40 to 42 (GHT). The active-site Proton acceptor is Asp-13. Mg(2+)-binding residues include Asp-13 and Gly-40. IMP is bound by residues 13–16 (DEGK), 38–41 (NAGH), Thr-130, Arg-144, Gln-224, Thr-239, and Arg-303. His-41 functions as the Proton donor in the catalytic mechanism. Residue 299-305 (VNTGRKR) participates in substrate binding. Residues Arg-305, 331-333 (KLD), and 413-415 (STS) contribute to the GTP site.

This sequence belongs to the adenylosuccinate synthetase family. In terms of assembly, homodimer. Mg(2+) is required as a cofactor.

Its subcellular location is the cytoplasm. It carries out the reaction IMP + L-aspartate + GTP = N(6)-(1,2-dicarboxyethyl)-AMP + GDP + phosphate + 2 H(+). It participates in purine metabolism; AMP biosynthesis via de novo pathway; AMP from IMP: step 1/2. Functionally, plays an important role in the de novo pathway of purine nucleotide biosynthesis. Catalyzes the first committed step in the biosynthesis of AMP from IMP. In Rhodopseudomonas palustris (strain ATCC BAA-98 / CGA009), this protein is Adenylosuccinate synthetase.